The following is a 169-amino-acid chain: MMTLIIPRKEAPVSGEGTVVIPQPAGDEPVIKNTFFFPDIDPKRVRERMRLEQTVAPARLREAIKSGMAETNAELYEYREQKIAAGFTRLADVPADDIDGESIKVFYYERAVCAMATASLYERYRGVDASAKGDKKADSIDSTIDELWRDMRWAVARIQGKPRCIVSQI.

The protein to phage HP1 protein ORF20.

Carries out the completion of filled heads by rendering the newly packaged DNA in filled heads resistant to DNase. The protein is assumed to bind to DNA-filled capsids. The polypeptide is Head completion/stabilization protein (L) (Enterobacteriaceae (Bacteriophage P2)).